Here is a 377-residue protein sequence, read N- to C-terminus: Tubulin--tyrosine ligase (377 aa).

The TTL domain occupies 3 to 370 (TFVVRDENSS…PPDTEQVPQQ (368 aa)).

It belongs to the tubulin--tyrosine ligase family. In terms of assembly, monomer. It depends on Mg(2+) as a cofactor. Requires K(+) as cofactor.

It carries out the reaction C-terminal L-alpha-aminoacyl-L-glutamyl-L-glutamyl-[tubulin] + L-tyrosine + ATP = C-terminal L-alpha-aminoacyl-L-glutamyl-L-glutamyl-L-tyrosyl-[tubulin] + ADP + phosphate + H(+). In terms of biological role, catalyzes the post-translational addition of a tyrosine to the C-terminal end of detyrosinated alpha-tubulin. The polypeptide is Tubulin--tyrosine ligase (Ttl) (Mus musculus (Mouse)).